Consider the following 446-residue polypeptide: Tubulin alpha-2 chain (446 aa).

Positions 1-4 (MREC) match the MREC motif motif. GTP-binding residues include Q11, E68, S137, G141, T142, S176, N203, and N225. E68 contributes to the Mg(2+) binding site. E251 is an active-site residue.

This sequence belongs to the tubulin family. Dimer of alpha and beta chains. A typical microtubule is a hollow water-filled tube with an outer diameter of 25 nm and an inner diameter of 15 nM. Alpha-beta heterodimers associate head-to-tail to form protofilaments running lengthwise along the microtubule wall with the beta-tubulin subunit facing the microtubule plus end conferring a structural polarity. Microtubules usually have 13 protofilaments but different protofilament numbers can be found in some organisms and specialized cells. It depends on Mg(2+) as a cofactor. In terms of processing, some glutamate residues at the C-terminus are polyglycylated, resulting in polyglycine chains on the gamma-carboxyl group. Glycylation is mainly limited to tubulin incorporated into axonemes (cilia and flagella) whereas glutamylation is prevalent in neuronal cells, centrioles, axonemes, and the mitotic spindle. Both modifications can coexist on the same protein on adjacent residues, and lowering polyglycylation levels increases polyglutamylation, and reciprocally. The precise function of polyglycylation is still unclear. Some glutamate residues at the C-terminus are polyglutamylated, resulting in polyglutamate chains on the gamma-carboxyl group. Polyglutamylation plays a key role in microtubule severing by spastin (SPAST). SPAST preferentially recognizes and acts on microtubules decorated with short polyglutamate tails: severing activity by SPAST increases as the number of glutamates per tubulin rises from one to eight, but decreases beyond this glutamylation threshold. As to expression, testis specific.

The protein localises to the cytoplasm. It is found in the cytoskeleton. The catalysed reaction is GTP + H2O = GDP + phosphate + H(+). In terms of biological role, tubulin is the major constituent of microtubules, a cylinder consisting of laterally associated linear protofilaments composed of alpha- and beta-tubulin heterodimers. Microtubules grow by the addition of GTP-tubulin dimers to the microtubule end, where a stabilizing cap forms. Below the cap, tubulin dimers are in GDP-bound state, owing to GTPase activity of alpha-tubulin. This Gallus gallus (Chicken) protein is Tubulin alpha-2 chain.